Reading from the N-terminus, the 300-residue chain is Nucleotide-binding protein Dshi_0209 (300 aa).

20 to 27 provides a ligand contact to ATP; sequence GPSGAGRT. 67 to 70 contacts GTP; it reads DART.

It belongs to the RapZ-like family.

Displays ATPase and GTPase activities. This chain is Nucleotide-binding protein Dshi_0209, found in Dinoroseobacter shibae (strain DSM 16493 / NCIMB 14021 / DFL 12).